The primary structure comprises 699 residues: 1,4-alpha-glucan-branching enzyme (699 aa).

Substrate-binding positions include 59-60 (NE) and 88-90 (WAP). Residue W104 participates in (1,4-alpha-D-glucosyl)n binding. 115 to 118 (DYGK) contributes to the substrate binding site. K140 contributes to the (1,4-alpha-D-glucosyl)n binding site. Position 170 is a phosphotyrosine (Y170). 330-333 (EVLR) contacts substrate. The active-site Nucleophile is the D354. The active-site Proton donor is the E409.

Belongs to the glycosyl hydrolase 13 family. GlgB subfamily. In terms of assembly, monomer.

The enzyme catalyses Transfers a segment of a (1-&gt;4)-alpha-D-glucan chain to a primary hydroxy group in a similar glucan chain.. Its pathway is glycan biosynthesis; glycogen biosynthesis. Glycogen-branching enzyme participates in the glycogen biosynthetic process along with glycogenin and glycogen synthase. Generates alpha-1,6-glucosidic branches from alpha-1,4-linked glucose chains, to increase solubility of the glycogen polymer. The chain is 1,4-alpha-glucan-branching enzyme (GBE1) from Felis catus (Cat).